Consider the following 513-residue polypeptide: uncharacterized protein (513 aa).

Positions H11–T219 constitute a CYTH domain. A CHAD domain is found at P228 to K506.

This is an uncharacterized protein from Mycobacterium tuberculosis (strain ATCC 25618 / H37Rv).